Here is a 455-residue protein sequence, read N- to C-terminus: Trigger factor (455 aa).

Positions 169–262 constitute a PPIase FKBP-type domain; it reads GDVAIVDYEG…VKELKAKELP (94 aa).

It belongs to the FKBP-type PPIase family. Tig subfamily.

Its subcellular location is the cytoplasm. It catalyses the reaction [protein]-peptidylproline (omega=180) = [protein]-peptidylproline (omega=0). Functionally, involved in protein export. Acts as a chaperone by maintaining the newly synthesized protein in an open conformation. Functions as a peptidyl-prolyl cis-trans isomerase. The chain is Trigger factor from Rippkaea orientalis (strain PCC 8801 / RF-1) (Cyanothece sp. (strain PCC 8801)).